Consider the following 314-residue polypeptide: uncharacterized protein (314 aa).

The region spanning 192 to 289 is the HTH araC/xylS-type domain; that stretch reads TEVKLHIKDN…GSSPGLFRSL (98 aa). DNA-binding regions (H-T-H motif) lie at residues 209–230 and 257–279; these read TDVA…AAEL and IKEI…SAKI.

This is an uncharacterized protein from Bacillus subtilis (strain 168).